A 159-amino-acid polypeptide reads, in one-letter code: Phosphopantetheine adenylyltransferase (159 aa).

Thr10 contacts substrate. ATP is bound by residues 10–11 (TF) and His18. Residues Lys42, Met74, and Arg88 each contribute to the substrate site. Residues 89 to 91 (GLR), Glu99, and 124 to 130 (WSFISSS) contribute to the ATP site.

It belongs to the bacterial CoaD family. In terms of assembly, homohexamer. Mg(2+) serves as cofactor.

The protein resides in the cytoplasm. The catalysed reaction is (R)-4'-phosphopantetheine + ATP + H(+) = 3'-dephospho-CoA + diphosphate. Its pathway is cofactor biosynthesis; coenzyme A biosynthesis; CoA from (R)-pantothenate: step 4/5. Functionally, reversibly transfers an adenylyl group from ATP to 4'-phosphopantetheine, yielding dephospho-CoA (dPCoA) and pyrophosphate. The chain is Phosphopantetheine adenylyltransferase from Shigella dysenteriae serotype 1 (strain Sd197).